Reading from the N-terminus, the 269-residue chain is Expansin-A32 (269 aa).

The N-terminal stretch at 1-25 is a signal peptide; the sequence is MWCTWALGRVVLAVVFLVALAAGDA. In terms of domain architecture, Expansin-like EG45 spans 60-174; sequence DGACGYKDTS…RRVPCVKVGG (115 aa). An Expansin-like CBD domain is found at 184 to 264; it reads YFNLVMVSNV…DWQFGVTYQA (81 aa).

The protein belongs to the expansin family. Expansin A subfamily.

The protein resides in the secreted. It is found in the cell wall. The protein localises to the membrane. Functionally, may cause loosening and extension of plant cell walls by disrupting non-covalent bonding between cellulose microfibrils and matrix glucans. No enzymatic activity has been found. May be required for rapid internodal elongation in deepwater rice during submergence. This Oryza sativa subsp. japonica (Rice) protein is Expansin-A32 (EXPA32).